The primary structure comprises 121 residues: Large ribosomal subunit protein bL20 (121 aa).

It belongs to the bacterial ribosomal protein bL20 family.

Binds directly to 23S ribosomal RNA and is necessary for the in vitro assembly process of the 50S ribosomal subunit. It is not involved in the protein synthesizing functions of that subunit. The sequence is that of Large ribosomal subunit protein bL20 from Beijerinckia indica subsp. indica (strain ATCC 9039 / DSM 1715 / NCIMB 8712).